The chain runs to 237 residues: DNA repair protein RecO (237 aa).

This sequence belongs to the RecO family.

Its function is as follows. Involved in DNA repair and RecF pathway recombination. This Flavobacterium johnsoniae (strain ATCC 17061 / DSM 2064 / JCM 8514 / BCRC 14874 / CCUG 350202 / NBRC 14942 / NCIMB 11054 / UW101) (Cytophaga johnsonae) protein is DNA repair protein RecO.